We begin with the raw amino-acid sequence, 194 residues long: Adenylate kinase (194 aa).

Residue 12–17 participates in ATP binding; that stretch reads GSGKTT. The segment at 34-63 is NMP; it reads STGDLLREEVKKGTPLGATIASFIDNGQLV. AMP is bound by residues Thr35, Arg40, 61–63, 88–91, and Gln95; these read QLV and GFPR. An LID region spans residues 130–136; the sequence is GRARGAD. Arg131 contributes to the ATP binding site. AMP contacts are provided by Arg133 and Arg145. Arg173 is a binding site for ATP.

This sequence belongs to the adenylate kinase family. In terms of assembly, monomer.

It localises to the cytoplasm. It carries out the reaction AMP + ATP = 2 ADP. Its pathway is purine metabolism; AMP biosynthesis via salvage pathway; AMP from ADP: step 1/1. Catalyzes the reversible transfer of the terminal phosphate group between ATP and AMP. Plays an important role in cellular energy homeostasis and in adenine nucleotide metabolism. This chain is Adenylate kinase, found in Nitratiruptor sp. (strain SB155-2).